The primary structure comprises 289 residues: Protease HtpX (289 aa).

The next 2 helical transmembrane spans lie at 5-25 (IVLF…VMSL) and 33-53 (MSGL…ISLL). A Zn(2+)-binding site is contributed by histidine 140. Glutamate 141 is a catalytic residue. Histidine 144 lines the Zn(2+) pocket. 2 consecutive transmembrane segments (helical) span residues 155–175 (LLQG…GGFI) and 193–213 (GIVL…TMWF). Glutamate 218 provides a ligand contact to Zn(2+).

The protein belongs to the peptidase M48B family. It depends on Zn(2+) as a cofactor.

Its subcellular location is the cell inner membrane. This chain is Protease HtpX, found in Xylella fastidiosa (strain M12).